Reading from the N-terminus, the 454-residue chain is Tol-Pal system protein TolB (454 aa).

The first 21 residues, Met-1–Ala-21, serve as a signal peptide directing secretion.

This sequence belongs to the TolB family. As to quaternary structure, the Tol-Pal system is composed of five core proteins: the inner membrane proteins TolA, TolQ and TolR, the periplasmic protein TolB and the outer membrane protein Pal. They form a network linking the inner and outer membranes and the peptidoglycan layer.

The protein resides in the periplasm. Functionally, part of the Tol-Pal system, which plays a role in outer membrane invagination during cell division and is important for maintaining outer membrane integrity. The polypeptide is Tol-Pal system protein TolB (Sphingopyxis alaskensis (strain DSM 13593 / LMG 18877 / RB2256) (Sphingomonas alaskensis)).